Reading from the N-terminus, the 1049-residue chain is RIMS-binding protein 2 (1049 aa).

Positions 164 to 231 (GKVHLCVARY…PSNFVDFIQD (68 aa)) constitute an SH3 1 domain. 3 consecutive Fibronectin type-III domains span residues 294–387 (VPYP…GKDV), 390–471 (APSQ…EKDE), and 486–587 (PPQD…VPPA). Disordered regions lie at residues 580-664 (PDLL…VSTT), 694-714 (SAGP…EVKR), and 728-750 (LGQQ…GSDL). Residues 582 to 598 (LLVPPAPHPRTAPPPKP) are compositionally biased toward pro residues. Positions 603–616 (MDTKDLGPHVKVDE) are enriched in basic and acidic residues. Positions 641–651 (GPGRRSPSPSR) are enriched in low complexity. Residues S701 and S709 each carry the phosphoserine modification. Positions 735-746 (CHGDEYHTESSR) are enriched in basic and acidic residues. 2 positions are modified to phosphoserine: S832 and S839. T841 carries the phosphothreonine modification. 2 SH3 domains span residues 848-916 (LPAR…EIHA) and 952-1019 (VPTR…EVPD). A disordered region spans residues 1024-1049 (HLSDAPPHYSHDPPMRTKAKRVSQPP). Over residues 1040-1049 (TKAKRVSQPP) the composition is skewed to basic residues.

It belongs to the RIMBP family. In terms of assembly, interacts with CACNA1D and CACNA1B, and potentially with other Ca(2+) channel alpha-1 isoforms. Interacts with RIMS1 and RIMS2.

It is found in the cell membrane. The protein resides in the synapse. Functionally, plays a role in the synaptic transmission as bifunctional linker that interacts simultaneously with RIMS1, RIMS2, CACNA1D and CACNA1B. This is RIMS-binding protein 2 (Rimbp2) from Rattus norvegicus (Rat).